The following is a 608-amino-acid chain: Phosphogluconate dehydratase (608 aa).

Residues Cys-154 and Cys-221 each contribute to the [4Fe-4S] cluster site.

The protein belongs to the IlvD/Edd family. Requires [4Fe-4S] cluster as cofactor.

The enzyme catalyses 6-phospho-D-gluconate = 2-dehydro-3-deoxy-6-phospho-D-gluconate + H2O. The protein operates within carbohydrate metabolism; Entner-Doudoroff pathway. Its function is as follows. Catalyzes the dehydration of 6-phospho-D-gluconate to 2-dehydro-3-deoxy-6-phospho-D-gluconate. The protein is Phosphogluconate dehydratase of Helicobacter pylori (strain ATCC 700392 / 26695) (Campylobacter pylori).